Reading from the N-terminus, the 623-residue chain is Fanconi anemia group G protein homolog (623 aa).

4 TPR repeats span residues 251–284, 349–382, 458–491, and 517–550; these read VQVYTALGACLRKMGNPQRALLYLTEALKVGTTC, SQAKHLLASRCLQTGRAEDAAEHYLDLLAMLLGG, SATHLLQGQAWSQLKAQKEALSEFSQCLELLFRT, and VAALISRGLEWVASGQDTKALSDFLLSVQICPGN.

In terms of assembly, belongs to the multisubunit FA complex composed of FANCA, FANCB, FANCC, FANCE, FANCF, FANCG, FANCL/PHF9 and FANCM. In complex with FANCF, FANCA and FANCL, but not with FANCC, nor FANCE, interacts with HES1; this interaction may be essential for the stability and nuclear localization of FA core complex proteins. The complex with FANCC and FANCG may also include EIF2AK2 and HSP70. In terms of tissue distribution, highest expression levels in spleen, thymus and testis.

The protein resides in the nucleus. In terms of biological role, DNA repair protein that may operate in a postreplication repair or a cell cycle checkpoint function. May be implicated in interstrand DNA cross-link repair and in the maintenance of normal chromosome stability. Candidate tumor suppressor gene. This chain is Fanconi anemia group G protein homolog (Fancg), found in Mus musculus (Mouse).